A 394-amino-acid polypeptide reads, in one-letter code: RNA binding protein fox-1 homolog 2 (394 aa).

2 disordered regions span residues 1–70 (MGRL…DYAG) and 83–135 (TQAH…HVSN). 2 stretches are compositionally biased toward polar residues: residues 24–36 (RDSQ…TTTP) and 83–103 (TQAH…SLTT). Low complexity predominate over residues 105 to 125 (GGAQTDGQQSQTQSSENSESK). An RRM domain is found at 129–205 (KRLHVSNIPF…RKIEVNNATA (77 aa)). Arg-285 is subject to Omega-N-methylarginine. Asymmetric dimethylarginine occurs at positions 301 and 333. 2 positions are modified to asymmetric dimethylarginine; alternate: Arg-385 and Arg-390. An omega-N-methylarginine; alternate mark is found at Arg-385 and Arg-390.

Interacts with ER-alpha N-terminal activation domain. Interacts with RBPMS; the interaction allows cooperative assembly of stable cell-specific alternative splicing regulatory complexes.

Its subcellular location is the nucleus. The protein localises to the cytoplasm. In terms of biological role, RNA-binding protein that regulates alternative splicing events by binding to 5'-UGCAUGU-3' elements. Prevents binding of U2AF2 to the 3'-splice site. Regulates alternative splicing of tissue-specific exons and of differentially spliced exons during erythropoiesis. Seems to act as a coregulatory factor of ER-alpha. Together with RNA binding proteins RBPMS and MBNL1/2, activates vascular smooth muscle cells alternative splicing events. The sequence is that of RNA binding protein fox-1 homolog 2 (RBFOX2) from Bos taurus (Bovine).